We begin with the raw amino-acid sequence, 185 residues long: Ribosome maturation factor RimM (185 aa).

One can recognise a PRC barrel domain in the interval 92 to 168 (DDDTFYHADL…GRRVVVAEAF (77 aa)).

This sequence belongs to the RimM family. Binds ribosomal protein uS19.

The protein resides in the cytoplasm. Functionally, an accessory protein needed during the final step in the assembly of 30S ribosomal subunit, possibly for assembly of the head region. Essential for efficient processing of 16S rRNA. May be needed both before and after RbfA during the maturation of 16S rRNA. It has affinity for free ribosomal 30S subunits but not for 70S ribosomes. This chain is Ribosome maturation factor RimM, found in Xanthobacter autotrophicus (strain ATCC BAA-1158 / Py2).